The sequence spans 436 residues: UPF0597 protein YhaM (436 aa).

It belongs to the UPF0597 family.

This chain is UPF0597 protein YhaM, found in Escherichia coli O45:K1 (strain S88 / ExPEC).